A 66-amino-acid polypeptide reads, in one-letter code: uncharacterized protein (66 aa).

2 consecutive transmembrane segments (helical) span residues 5-25 and 30-50; these read ALIV…PLVN and IMFG…VTPL.

The protein localises to the cell membrane. This is an uncharacterized protein from Bacillus subtilis (strain 168).